Here is a 266-residue protein sequence, read N- to C-terminus: Gasdermin bGSDM (266 aa).

The next 4 membrane-spanning stretches (beta stranded) occupy residues 65-81, 93-113, 162-181, and 187-203; these read FSGQ…GADL, EDKL…FAYE, QFTV…EAAV, and AHAS…SLQT. The segment at 248 to 266 is C-terminal region; sequence GEEDFSVQPLQAPSGLLKL.

This sequence belongs to the bacterial gasdermin family. In terms of assembly, monomer. Forms large, homooligomeric ring-shaped pores when inserted in membranes.

It is found in the cytoplasm. The protein resides in the cell membrane. Its activity is regulated as follows. The full-length protein before cleavage is inactive: intramolecular interactions between the N-terminal domain and the C-terminal region mediate autoinhibition. The pyroptosis-like-inducing activity is carried by the released N-terminal domain (Gasdermin bGSDM, N-terminus). Precursor of a pore-forming protein involved in defense against bacteriophages. Cleavage of this precursor by its dedicated protease releases the active moiety (gasdermin bGSDM, N-terminus) which inserts into membranes, forming pores and triggering cell death. Expression of bGSDM and the neighboring protease gene (Ga0307981_100051430) is highly toxic in E.coli. Functionally, pore-forming protein that causes membrane permeabilization via a pyroptosis-like activity. This is the active form which makes ring-like pores with an interior pore diameter of 130-190 Angstroms, when integrated in liposomes. This is Gasdermin bGSDM from Unknown prokaryotic organism.